Here is a 450-residue protein sequence, read N- to C-terminus: Putative gustatory receptor 28a (450 aa).

Residues 1–47 (MAFKLWERFSQADNVFQALRPLTFISLLGLAPFRLNLNPRKEVQTSK) are Cytoplasmic-facing. The chain crosses the membrane as a helical span at residues 48-68 (FSFFAGIVHFLFFVLCFGISV). Residues 69–87 (KEGDSIIGYFFQTNITRFS) lie on the Extracellular side of the membrane. The N-linked (GlcNAc...) asparagine glycan is linked to asparagine 82. The helical transmembrane segment at 88–108 (DGTLRLTGILAMSTIFGFAMF) threads the bilayer. Topologically, residues 109–138 (KRQRLVSIIQNNIVVDEIFVRLGMKLDYRR) are cytoplasmic. The helical transmembrane segment at 139–159 (ILLSSFLISLGMLLFNVIYLC) threads the bilayer. Topologically, residues 160–171 (VSYSLLVSATIS) are extracellular. The helical transmembrane segment at 172-192 (PSFVTFTTFALPHINISLMVF) threads the bilayer. At 193 to 292 (KFLCTTDLAR…CQTIEEYFTY (100 aa)) the chain is on the cytoplasmic side. A helical transmembrane segment spans residues 293–313 (PLLGIIAISFLFILFDDFYIL). At 314–329 (EAILNPKRLDVFEADE) the chain is on the extracellular side. A helical transmembrane segment spans residues 330-350 (FFAFFLMQLIWYIVIIVLIVE). Residues 351–407 (GSSRTILHSSYTAAIVHKILNITDDPELRDRLFRLSLQLSHRKVLFTAAGLFRLDRT) are Cytoplasmic-facing. The chain crosses the membrane as a helical span at residues 408–424 (LIFTITGAATCYLIILI). Topologically, residues 425-450 (QFRFTHHMDDTSSNSTNNLHSIHLGD) are extracellular. Asparagine 438 is a glycosylation site (N-linked (GlcNAc...) asparagine).

It belongs to the insect chemoreceptor superfamily. Gustatory receptor (GR) family. Gr2a subfamily. In terms of tissue distribution, in addition to expression in a large number of taste neurons, Gr28a is also expressed in a few nonchemosensory neurons, including the campaniform sensilla of the wing, leg stretch receptors, and multiple dendritic (MD) neurons in the abdomen. In larvea, is expressed in neurons of the terminal external chemosensory organ, the dorsal external chemosensory organ, as well as in the ventral and posterior pharyngeal sense organ.

It is found in the cell membrane. Probable gustatory receptor which mediates acceptance or avoidance behavior, depending on its substrates. Atypical expression also suggests nongustatory roles in the nervous system and tissues involved in proprioception, hygroreception, and other sensory modalities. It is also possible that it has chemosensory roles in the detection of internal ligands. The chain is Putative gustatory receptor 28a (Gr28a) from Drosophila melanogaster (Fruit fly).